A 468-amino-acid chain; its full sequence is METFANGMTLDVTVDALAPGGKAVCRHEGRVIFVDRGLPGQQLHVRLTTVRKRFAEAECLAVVTHTADECDPFCPHFGDCGGCTWQNLPYPAQLAWKERFVRDSLQRIGRIEAPNVLPTLPSPLQQGFRNKMEFAFTTDDREMLHLGLRRRGGHEVVDVTSCGLQTATTCRVVTTARDIARASGLPGWDDAAHRGFWRFLVVREPARGGQCLVQCITAPHPEAEHVARAFFTALRQAVPEVTGCVHSIRSQNSQVAYGDATVFTEGEIVLTEKLGAIELDFGHDTFLQTNTRATELLYGEVERMAGLSGREHVWDLYCGVGSIALWLAEHAATICGMEATPASVEAAQRNAQAAGCTHCDFVAGDVRALLRSRSKGKAQEPIPDVVVTDPPRAGMHPDVIDALLQTAPARIVYVSCDPATMARDVGLLMQRYTLHEARPVDLFPHTPHVETVVLLSNKEVDDTISTTV.

The TRAM domain maps to 3–61 (TFANGMTLDVTVDALAPGGKAVCRHEGRVIFVDRGLPGQQLHVRLTTVRKRFAEAECLA). Residues cysteine 74, cysteine 80, cysteine 83, and cysteine 162 each coordinate [4Fe-4S] cluster. Residues glutamine 288, tyrosine 317, glutamate 338, and aspartate 389 each coordinate S-adenosyl-L-methionine. Cysteine 416 serves as the catalytic Nucleophile.

This sequence belongs to the class I-like SAM-binding methyltransferase superfamily. RNA M5U methyltransferase family.

This is an uncharacterized protein from Nitratidesulfovibrio vulgaris (strain ATCC 29579 / DSM 644 / CCUG 34227 / NCIMB 8303 / VKM B-1760 / Hildenborough) (Desulfovibrio vulgaris).